The following is a 155-amino-acid chain: Ribosomal RNA large subunit methyltransferase H (155 aa).

S-adenosyl-L-methionine-binding positions include Gly104 and 123-128 (LSRLTL).

It belongs to the RNA methyltransferase RlmH family. Homodimer.

The protein localises to the cytoplasm. The catalysed reaction is pseudouridine(1915) in 23S rRNA + S-adenosyl-L-methionine = N(3)-methylpseudouridine(1915) in 23S rRNA + S-adenosyl-L-homocysteine + H(+). Specifically methylates the pseudouridine at position 1915 (m3Psi1915) in 23S rRNA. This is Ribosomal RNA large subunit methyltransferase H from Marinomonas sp. (strain MWYL1).